A 158-amino-acid polypeptide reads, in one-letter code: Curculin-2 (158 aa).

Positions 1-22 (MAAKFLLTILVTFAAVASLGMA) are cleaved as a signal peptide. A Bulb-type lectin domain is found at 23–131 (DSVLLSGQTL…VLWPLGLNGC (109 aa)). C51 and C74 form a disulfide bridge. A glycan (N-linked (GlcNAc...) asparagine) is linked at N103. The propeptide occupies 136-158 (GEITVAKDSTEPQHEDIKMVINN).

As to quaternary structure, heterodimer with curculin-1; Disulfide-linked.

Its function is as follows. Taste-modifying protein; sweet-tasting. After curculin, water elicits a sweet taste, and sour substances induce a stronger sense of sweetness. This is Curculin-2 from Molineria latifolia (Lumbah).